The sequence spans 541 residues: Propionate catabolism operon regulatory protein (541 aa).

One can recognise a Sigma-54 factor interaction domain in the interval 221–464; it reads IRGQSPQMEQ…RNMMERLALF (244 aa). 321 to 330 lines the ATP pocket; the sequence is AHGGTLFLDE. Positions 513–532 form a DNA-binding region, H-T-H motif; sequence KTAAARYLGISRTTLWRRLK.

Involved in the transcriptional regulation of the propionate catabolism operon. The sequence is that of Propionate catabolism operon regulatory protein (prpR) from Salmonella typhimurium (strain LT2 / SGSC1412 / ATCC 700720).